Here is a 385-residue protein sequence, read N- to C-terminus: Basigin (385 aa).

The N-terminal stretch at 1-21 is a signal peptide; the sequence is MAAALFVLLGFALLGTHGASG. The Ig-like domain maps to 37–120; that stretch reads GGSVELHCEA…SNDPDRNHLT (84 aa). Cystine bridges form between C44–C108, C157–C203, and C242–C301. Residues 138-219 form the Ig-like C2-type domain; it reads EPGTVFTTVE…MGTANIQLHG (82 aa). The Extracellular segment spans residues 138-323; sequence EPGTVFTTVE…ITLRVRSHLA (186 aa). N160 carries an N-linked (GlcNAc...) asparagine glycan. An essential for interaction with KDR/VEGFR2 region spans residues 195–199; sequence DDQWG. Residues 221 to 315 form the Ig-like V-type domain; that stretch reads PRVKAVKSSE…SKGSDQAIIT (95 aa). N268 and N302 each carry an N-linked (GlcNAc...) asparagine glycan. The helical transmembrane segment at 324–344 threads the bilayer; that stretch reads ALWPFLGIVAEVLVLVTIIFI. The Cytoplasmic portion of the chain corresponds to 345–385; that stretch reads YEKRRKPEDVLDDDDAGSAPLKSSGQHQNDKGKNVRQRNSS. Residues 353–385 are disordered; sequence DVLDDDDAGSAPLKSSGQHQNDKGKNVRQRNSS. Residues S362 and S368 each carry the phosphoserine modification.

Homooligomer. Interacts with NXNL1. Interacts with SLC2A1 and SLC16A1/GLUT1. Interacts with XKR8; promoting its localization at the cell membrane. As to quaternary structure, (Microbial infection) Interacts with P.falciparum (isolate 3D7) RH5/PfRH5; the interaction is required for the invasion of the host erythrocytes by the parasite at the merozoite stage. In terms of assembly, homooligomer. Forms heterooligomers with isoform 3. Interacts with VEGFA and KDR/VEGFR2. Interacts with PPIA/CYPA. Interacts with PPIL2; regulates BSG transport to the cell membrane. Interacts with SLC16A1; interaction mediates SLC16A3 targeting to the plasma membrane. Interacts with SLC16A12. Interacts with SLC16A11. Interacts with AJAP1. Interacts with SLC1A3, ATP1B2, MAG and L1CAM. Interacts with SLC16A3; interaction mediates SLC16A3 targeting to the plasma membrane. (Microbial infection) Interacts with P.falciparum (isolates 3D7 or 7G8) RH5/PfRH5; the interaction is required for the invasion of the host erythrocytes by the parasite at the merozoite stage. As to quaternary structure, (Microbial infection) Does not interact with severe acute respiratory syndrome coronavirus 2 (SARS-CoV-2) spike glycoprotein, even if previous works were based on a putative interaction. In terms of assembly, forms heterooligomers with isoform 2. Interacts with SLC16A6; this interaction mediates targeting to the plasma membrane. N-glycosylated. Retina-specific. Expressed in retinal cone photoreceptors (at protein level). As to expression, expressed in erythrocytes (at protein level). Highly expressed in melanoma cell lines (at protein level). Highly expressed in the heart, kidney, skeletal muscle and testis. In terms of tissue distribution, highly expressed in the bone marrow, fetal liver, lung, testis and thymus.

Its subcellular location is the melanosome. It localises to the cell membrane. The protein localises to the photoreceptor inner segment. The protein resides in the cell projection. It is found in the cilium. Its subcellular location is the photoreceptor outer segment. It localises to the endosome. The protein localises to the endoplasmic reticulum membrane. The protein resides in the basolateral cell membrane. In terms of biological role, essential for normal retinal maturation and development. Acts as a retinal cell surface receptor for NXNL1 and plays an important role in NXNL1-mediated survival of retinal cone photoreceptors. In association with glucose transporter SLC16A1/GLUT1 and NXNL1, promotes retinal cone survival by enhancing aerobic glycolysis and accelerating the entry of glucose into photoreceptors. May act as a potent stimulator of IL6 secretion in multiple cell lines that include monocytes. Its function is as follows. (Microbial infection) Erythrocyte receptor for P.falciparum RH5 which is essential for erythrocyte invasion by the merozoite stage of P.falciparum isolates 3D7 and Dd2. Functionally, signaling receptor for cyclophilins, essential for PPIA/CYPA and PPIB/CYPB-dependent signaling related to chemotaxis and adhesion of immune cells. Plays an important role in targeting monocarboxylate transporters SLC16A1/GLUT1, SLC16A11 and SLC16A12 to the plasma membrane. Acts as a coreceptor for vascular endothelial growth factor receptor 2 (KDR/VEGFR2) in endothelial cells enhancing its VEGFA-mediated activation and downstream signaling. Promotes angiogenesis through EPAS1/HIF2A-mediated up-regulation of VEGFA (isoform VEGF-165 and VEGF-121) and KDR/VEGFR2 in endothelial cells. Plays a key role in regulating tumor growth, invasion, metastasis and neoangiogenesis by stimulating the production and release of extracellular matrix metalloproteinases and KDR/VEGFR2 by both tumor cells and stromal cells (fibroblasts and endothelial cells). (Microbial infection) Erythrocyte receptor for P.falciparum RH5 which is essential for erythrocyte invasion by the merozoite stage of P.falciparum isolates 3D7, Dd2, 7G8 and HB3. Binding of P.falciparum RH5 results in BSG dimerization which triggers an increase in intracellular Ca(2+) in the erythrocyte. This essential step leads to a rearrangement of the erythrocyte cytoskeleton required for the merozoite invasion. In terms of biological role, (Microbial infection) Can facilitate human SARS coronavirus (SARS-CoV-1) infection via its interaction with virus-associated PPIA/CYPA. Its function is as follows. (Microbial infection) Can facilitate HIV-1 infection via its interaction with virus-associated PPIA/CYPA. Functionally, (Microbial infection) First described as a receptor for severe acute respiratory syndrome coronavirus 2 (SARS-CoV-2), it is not required for SARS-CoV-2 infection. (Microbial infection) Acts as a receptor for measles virus. In terms of biological role, (Microbial infection) Promotes entry of pentamer-expressing human cytomegalovirus (HCMV) into epithelial and endothelial cells. The protein is Basigin of Homo sapiens (Human).